The following is a 131-amino-acid chain: MSWQAYVDEHLMCEIEGHHLTSAAIVGHDGAVWAQSTAFPQSKTEEMTNIMKDFDEPGFLAPTGLFLGPTKYMVIQGEPGAVIRGKKGSGGITVKKTGQAMVVGIYDEPMTPGQCNMVVERLGDYLLEQGL.

Residues C13 and C115 are joined by a disulfide bond. The Involved in PIP2 interaction signature appears at 81–97; the sequence is AVIRGKKGSGGITVKKT. Phosphothreonine is present on T111.

The protein belongs to the profilin family. As to quaternary structure, occurs in many kinds of cells as a complex with monomeric actin in a 1:1 ratio. Phosphorylated by MAP kinases.

The protein localises to the cytoplasm. Its subcellular location is the cytoskeleton. In terms of biological role, binds to actin and affects the structure of the cytoskeleton. At high concentrations, profilin prevents the polymerization of actin, whereas it enhances it at low concentrations. This is Profilin-11 from Zea mays (Maize).